We begin with the raw amino-acid sequence, 54 residues long: Defensin-like protein 1 (54 aa).

4 disulfide bridges follow: C6–C54, C17–C39, C23–C48, and C27–C50.

It belongs to the DEFL family.

The protein localises to the secreted. Its function is as follows. Possesses antifungal activity insensitive to inorganic cations. Causes germ tubes and hyphae to swell and form multiple hyphal buds. Binds to the plasma membrane of the fungus. Has no inhibitory effect on insect gut alpha-amylase. The chain is Defensin-like protein 1 from Heuchera sanguinea (Coralbells).